The primary structure comprises 108 residues: Large ribosomal subunit protein uL24 (108 aa).

This sequence belongs to the universal ribosomal protein uL24 family. In terms of assembly, part of the 50S ribosomal subunit.

One of two assembly initiator proteins, it binds directly to the 5'-end of the 23S rRNA, where it nucleates assembly of the 50S subunit. Its function is as follows. One of the proteins that surrounds the polypeptide exit tunnel on the outside of the subunit. The sequence is that of Large ribosomal subunit protein uL24 from Mycoplasma genitalium (strain ATCC 33530 / DSM 19775 / NCTC 10195 / G37) (Mycoplasmoides genitalium).